Reading from the N-terminus, the 297-residue chain is Trimeric intracellular cation channel type A (297 aa).

The Lumenal segment spans residues 1–18 (MDLISSLSLGELALSFSR). A helical transmembrane segment spans residues 19 to 39 (VPLFPVFDLSYFIVSIIYLKY). At 40 to 51 (EPGSVELSRRHP) the chain is on the cytoplasmic side. A helical transmembrane segment spans residues 52 to 72 (VASWLCAMLHCFGSYILADLL). At 73 to 85 (LGEPIIDYFSNSS) the chain is on the lumenal side. G74 contacts Ca(2+). Residues 86–106 (SILLASGVWYLIFFCPLDLFY) form a helical membrane-spanning segment. At 107 to 143 (KCVCFLPVKLIFVAMKEVVRVRKIAVGIHHAHHYHHG) the chain is on the cytoplasmic side. Positions 122 and 126 each coordinate a 1,2-diacyl-sn-glycero-3-phospho-(1D-myo-inositol-4,5-bisphosphate). A helical membrane pass occupies residues 144-164 (WFIMIATGWVKGSGVALLSNL). Topologically, residues 165-177 (EQLLRGVWKPETN) are lumenal. A helical transmembrane segment spans residues 178–198 (EILHMSFPTKASLYGAILFTL). The Cytoplasmic segment spans residues 199 to 208 (QQTRWLPVSK). A helical membrane pass occupies residues 209-229 (ASLIFVFTMFMVSCKVFLTAT). The Lumenal segment spans residues 230–233 (HSHS). The helical transmembrane segment at 234–254 (SPFDVLEGYICPVLFGATWGG) threads the bilayer. Residues 255 to 297 (DHHHDNHGAPHGMGLGTQHSGLPAKAKEELSEGFRKKKTKKAD) are Cytoplasmic-facing. The tract at residues 259-297 (DNHGAPHGMGLGTQHSGLPAKAKEELSEGFRKKKTKKAD) is disordered. The span at 279–288 (KAKEELSEGF) shows a compositional bias: basic and acidic residues.

Belongs to the TMEM38 family. As to quaternary structure, homotrimer; conformation seems to be controled by binding to diacylglycerol (DAG).

The protein localises to the sarcoplasmic reticulum membrane. Its subcellular location is the nucleus membrane. It carries out the reaction K(+)(in) = K(+)(out). With respect to regulation, channel activity is activated by a change of voltage within the sarcoplasmic reticulum lumen and blocked by luminal high Ca(2+) levels. Its function is as follows. Intracellular monovalent cation channel required for maintenance of rapid intracellular calcium release. Acts as a potassium counter-ion channel that functions in synchronization with calcium release from intracellular stores. Opened by a change of voltage within the sarcoplasmic reticulum lumen. This chain is Trimeric intracellular cation channel type A, found in Rattus norvegicus (Rat).